The sequence spans 140 residues: Class I hydrophobin 1 (140 aa).

The signal sequence occupies residues 1–18 (MKFAAVVVLAAAAAAVSA). The disordered stretch occupies residues 22–60 (AQRMARGLPPKAPIRRHGTPADTEKRSHPSSTGGGQCNT). 4 disulfides stabilise this stretch: Cys58/Cys119, Cys65/Cys113, Cys66/Cys99, and Cys120/Cys133.

It belongs to the fungal hydrophobin family. Self-assembles to form functional amyloid fibrils called rodlets. Self-assembly into fibrillar rodlets occurs spontaneously at hydrophobic:hydrophilic interfaces and the rodlets further associate laterally to form amphipathic monolayers.

It localises to the secreted. Its subcellular location is the cell wall. Its function is as follows. Aerial growth, conidiation, and dispersal of filamentous fungi in the environment rely upon a capability of their secreting small amphipathic proteins called hydrophobins (HPBs) with low sequence identity. Class I can self-assemble into an outermost layer of rodlet bundles on aerial cell surfaces, conferring cellular hydrophobicity that supports fungal growth, development and dispersal; whereas Class II form highly ordered films at water-air interfaces through intermolecular interactions but contribute nothing to the rodlet structure. This chain is Class I hydrophobin 1, found in Pisolithus tinctorius (Dead man's foot).